The sequence spans 314 residues: Coiled-coil domain-containing protein 42 like-2 (314 aa).

Coiled coils occupy residues 34–133 and 175–231; these read RLLE…KGTL and NKLL…FQWE.

The protein belongs to the CFAP73 family.

The protein is Coiled-coil domain-containing protein 42 like-2 of Xenopus tropicalis (Western clawed frog).